The sequence spans 147 residues: 3-dehydroquinate dehydratase (147 aa).

Catalysis depends on Tyr-25, which acts as the Proton acceptor. Residues Asn-76, His-82, and Asp-89 each contribute to the substrate site. His-102 acts as the Proton donor in catalysis. Substrate is bound by residues Ile-103–Ser-104 and Arg-113.

The protein belongs to the type-II 3-dehydroquinase family. In terms of assembly, homododecamer.

It catalyses the reaction 3-dehydroquinate = 3-dehydroshikimate + H2O. It participates in metabolic intermediate biosynthesis; chorismate biosynthesis; chorismate from D-erythrose 4-phosphate and phosphoenolpyruvate: step 3/7. In terms of biological role, catalyzes a trans-dehydration via an enolate intermediate. In Mycobacterium tuberculosis (strain ATCC 25177 / H37Ra), this protein is 3-dehydroquinate dehydratase.